The chain runs to 395 residues: Ribosomal RNA large subunit methyltransferase I (395 aa).

Residues 2 to 79 form the PUA domain; the sequence is SSRVTLHPGR…QNESVDNGFF (78 aa).

The protein belongs to the methyltransferase superfamily. RlmI family.

Its subcellular location is the cytoplasm. It catalyses the reaction cytidine(1962) in 23S rRNA + S-adenosyl-L-methionine = 5-methylcytidine(1962) in 23S rRNA + S-adenosyl-L-homocysteine + H(+). Functionally, specifically methylates the cytosine at position 1962 (m5C1962) of 23S rRNA. The polypeptide is Ribosomal RNA large subunit methyltransferase I (Pseudoalteromonas atlantica (strain T6c / ATCC BAA-1087)).